Reading from the N-terminus, the 250-residue chain is Hydroxyacylglutathione hydrolase (250 aa).

The Zn(2+) site is built by His-52, His-54, Asp-56, His-57, His-107, Asp-128, and His-166.

The protein belongs to the metallo-beta-lactamase superfamily. Glyoxalase II family. In terms of assembly, monomer. It depends on Zn(2+) as a cofactor.

It catalyses the reaction an S-(2-hydroxyacyl)glutathione + H2O = a 2-hydroxy carboxylate + glutathione + H(+). It participates in secondary metabolite metabolism; methylglyoxal degradation; (R)-lactate from methylglyoxal: step 2/2. Its function is as follows. Thiolesterase that catalyzes the hydrolysis of S-D-lactoyl-glutathione to form glutathione and D-lactic acid. This Neisseria meningitidis serogroup A / serotype 4A (strain DSM 15465 / Z2491) protein is Hydroxyacylglutathione hydrolase.